The primary structure comprises 109 residues: Nucleoid-associated protein AHA_2212 (109 aa).

2 disordered regions span residues 1-23 and 88-109; these read MFGK…RMQK and NKSK…KMPF. Residues 11-23 are compositionally biased toward low complexity; the sequence is MKQAQQMQERMQK.

Belongs to the YbaB/EbfC family. In terms of assembly, homodimer.

The protein localises to the cytoplasm. Its subcellular location is the nucleoid. Its function is as follows. Binds to DNA and alters its conformation. May be involved in regulation of gene expression, nucleoid organization and DNA protection. In Aeromonas hydrophila subsp. hydrophila (strain ATCC 7966 / DSM 30187 / BCRC 13018 / CCUG 14551 / JCM 1027 / KCTC 2358 / NCIMB 9240 / NCTC 8049), this protein is Nucleoid-associated protein AHA_2212.